The primary structure comprises 463 residues: MQLTHLLAFALSLATSEAAYKGFNYGATKSDGSVKSQSDFESEFSTAKNLVGTSGFTSARLYTMIQGGTTNSPISAIPAAIAENTSLLLGLWASGGGMDNELAALKSAISQYGDSFAKLVVGISVGSEDLYRASSEGEKVNAGIGIGPDDLVSFIKEVRSIISGTALSSVPIGHVDTWTAWTNGSNSAVIDAVDWLGFDGYPYFQSSMSNSISDAKSLFDDSVAKTKAVAKGKEVWITETGWPVSGSTQNLGVASLANAKTYWDEVGCPLFDETNTWWYILQDANPTTPNPSFGVVGSTLSTTPLFDLSCSNSTRPSASASSSAAGSATPVGSAVPSGSAAVNPSSSGIVSSAVPSTTPGFTVGKGFRPSNSSAAAYYSSASASGSAYPKFTKTASGSSATSTTAGSSSDSSSTNSGKSSSESSSTNSGASASSSILATGGASSVSGSVFGALVAVFAFVATL.

The first 18 residues, 1–18 (MQLTHLLAFALSLATSEA), serve as a signal peptide directing secretion. N84 carries an N-linked (GlcNAc...) asparagine glycan. E128 (proton donor) is an active-site residue. A glycan (N-linked (GlcNAc...) asparagine) is linked at N183. E239 serves as the catalytic Nucleophile. Residue N312 is glycosylated (N-linked (GlcNAc...) asparagine). Disordered stretches follow at residues 317–354 (SASA…SSAV) and 396–430 (SGSS…NSGA). G440 carries the GPI-anchor amidated glycine lipid modification. The propeptide at 441–463 (GASSVSGSVFGALVAVFAFVATL) is removed in mature form.

Belongs to the glycosyl hydrolase 17 family. Post-translationally, the GPI-anchor is attached to the protein in the endoplasmic reticulum and serves to target the protein to the cell surface. There, the glucosamine-inositol phospholipid moiety is cleaved off and the GPI-modified mannoprotein is covalently attached via its lipidless GPI glycan remnant to the 1,6-beta-glucan of the outer cell wall layer.

It localises to the cell membrane. Its subcellular location is the secreted. It is found in the cell wall. The enzyme catalyses Hydrolysis of (1-&gt;3)-beta-D-glucosidic linkages in (1-&gt;3)-beta-D-glucans.. Glucanases play a role in cell expansion during growth, in cell-cell fusion during mating, and in spore release during sporulation. This enzyme may be involved in beta-glucan degradation and also function biosynthetically as a transglycosylase. This Aspergillus oryzae (strain ATCC 42149 / RIB 40) (Yellow koji mold) protein is Probable glucan endo-1,3-beta-glucosidase eglC (eglC).